Here is a 180-residue protein sequence, read N- to C-terminus: SAGA-associated factor 11 homolog (180 aa).

An SGF11-type zinc finger spans residues 98-119 (CSCPNCNRIVAASRFAPHLEKC). The segment at 138-180 (RDGGNYFGADEDDEDDADWSGEKRKKKIAPVRTNGSKKNGKTS) is disordered. Acidic residues predominate over residues 146–156 (ADEDDEDDADW).

This sequence belongs to the SGF11 family. In terms of assembly, component of some SAGA transcription coactivator-HAT complexes. Within the SAGA complex, participates in a subcomplex of SAGA called the DUB module (deubiquitination module).

Its subcellular location is the nucleus. Functionally, component of the transcription regulatory histone acetylation (HAT) complex SAGA, a multiprotein complex that activates transcription by remodeling chromatin and mediating histone acetylation and deubiquitination. Within the SAGA complex, participates in a subcomplex that specifically deubiquitinates histone H2B. The SAGA complex is recruited to specific gene promoters by activators, where it is required for transcription. The protein is SAGA-associated factor 11 homolog of Aedes aegypti (Yellowfever mosquito).